A 426-amino-acid polypeptide reads, in one-letter code: Tyrosine--tRNA ligase (426 aa).

Tyr37 contributes to the L-tyrosine binding site. A 'HIGH' region motif is present at residues 42–51 (PTADSLHLGH). Residues Tyr175 and Gln179 each coordinate L-tyrosine. Residues 235 to 239 (KFGKT) carry the 'KMSKS' region motif. Position 238 (Lys238) interacts with ATP. Positions 357-415 (TDLMQALVESELQPSRGQARKAIAANGVTVNGIKQPDPDYVLNENDRYFSNYTLLRRGK) constitute an S4 RNA-binding domain.

It belongs to the class-I aminoacyl-tRNA synthetase family. TyrS type 1 subfamily. Homodimer.

The protein resides in the cytoplasm. The enzyme catalyses tRNA(Tyr) + L-tyrosine + ATP = L-tyrosyl-tRNA(Tyr) + AMP + diphosphate + H(+). Catalyzes the attachment of tyrosine to tRNA(Tyr) in a two-step reaction: tyrosine is first activated by ATP to form Tyr-AMP and then transferred to the acceptor end of tRNA(Tyr). This chain is Tyrosine--tRNA ligase, found in Klebsiella pneumoniae (strain 342).